The sequence spans 687 residues: Acetolactate synthase catalytic subunit, mitochondrial (687 aa).

A mitochondrion-targeting transit peptide spans 1–90; that stretch reads MIRQSTLKNF…AEPDMDTSFV (90 aa). The segment covering 43-52 has biased composition (low complexity); the sequence is YYSASPLPAS. Positions 43 to 68 are disordered; it reads YYSASPLPASKRPEPAPSFNVDPLEQ. E139 provides a ligand contact to thiamine diphosphate. FAD-binding positions include R241, 355–376, and 407–426; these read HGCA…VGAR and EVSP…VEGD. The interval 499-579 is thiamine pyrophosphate binding; the sequence is QHQMWAAQHW…VKILILNNEE (81 aa). Residues D550, N577, and E579 each coordinate Mg(2+).

It belongs to the TPP enzyme family. In terms of assembly, homodimer. The acetolactate synthase complex contains the catalytic subunit ILV2 and the regulatory small subunit ILV6. It depends on Mg(2+) as a cofactor. Thiamine diphosphate is required as a cofactor.

The protein localises to the mitochondrion. It catalyses the reaction 2 pyruvate + H(+) = (2S)-2-acetolactate + CO2. It carries out the reaction 2-oxobutanoate + pyruvate + H(+) = (S)-2-ethyl-2-hydroxy-3-oxobutanoate + CO2. It participates in amino-acid biosynthesis; L-isoleucine biosynthesis; L-isoleucine from 2-oxobutanoate: step 1/4. The protein operates within amino-acid biosynthesis; L-valine biosynthesis; L-valine from pyruvate: step 1/4. The regulatory subunit ILV6 stimulates enzymatic activity seven- to tenfold and confers sensitivity to inhibition by valine and activation by ATP. Its function is as follows. Catalytic subunit of mitochondrial acetolactate synthase, which catalyzes the first of a series of common steps in the biosynthesis of the branched-chain amino acids. Catalyzes the irreversible decarboxylation of pyruvate to a bound hydroxyethyl group that then condenses with either a second pyruvate molecule to form 2-acetolactate (AL) or with 2-ketobutyrate to form 2-aceto-2-hydroxybutyrate (AHB). The first product is the precursor for valine and leucine biosynthesis, while the second leads to isoleucine. In Saccharomyces cerevisiae (strain ATCC 204508 / S288c) (Baker's yeast), this protein is Acetolactate synthase catalytic subunit, mitochondrial (ILV2).